The primary structure comprises 69 residues: Cytochrome c oxidase subunit 8A, mitochondrial (69 aa).

The transit peptide at 1–25 (MSSLTPLLLRSLTGPARRLMVPRAQ) directs the protein to the mitochondrion. Positions 2-19 (SSLTPLLLRSLTGPARRL) match the SIFI-degron motif. The Mitochondrial matrix portion of the chain corresponds to 26–36 (VHSKPPREQLG). Residues 37–60 (VLDITIGLTSCFVCCLLPAGWVLS) form a helical membrane-spanning segment. The Mitochondrial intermembrane portion of the chain corresponds to 61–69 (HLESYKKRE).

This sequence belongs to the cytochrome c oxidase VIII family. As to quaternary structure, component of the cytochrome c oxidase (complex IV, CIV), a multisubunit enzyme composed of 14 subunits. The complex is composed of a catalytic core of 3 subunits MT-CO1, MT-CO2 and MT-CO3, encoded in the mitochondrial DNA, and 11 supernumerary subunits COX4I, COX5A, COX5B, COX6A, COX6B, COX6C, COX7A, COX7B, COX7C, COX8 and NDUFA4, which are encoded in the nuclear genome. The complex exists as a monomer or a dimer and forms supercomplexes (SCs) in the inner mitochondrial membrane with NADH-ubiquinone oxidoreductase (complex I, CI) and ubiquinol-cytochrome c oxidoreductase (cytochrome b-c1 complex, complex III, CIII), resulting in different assemblies (supercomplex SCI(1)III(2)IV(1) and megacomplex MCI(2)III(2)IV(2)). Post-translationally, in response to mitochondrial stress, the precursor protein is ubiquitinated by the SIFI complex in the cytoplasm before mitochondrial import, leading to its degradation. Within the SIFI complex, UBR4 initiates ubiquitin chain that are further elongated or branched by KCMF1.

It is found in the mitochondrion inner membrane. Its pathway is energy metabolism; oxidative phosphorylation. In terms of biological role, component of the cytochrome c oxidase, the last enzyme in the mitochondrial electron transport chain which drives oxidative phosphorylation. The respiratory chain contains 3 multisubunit complexes succinate dehydrogenase (complex II, CII), ubiquinol-cytochrome c oxidoreductase (cytochrome b-c1 complex, complex III, CIII) and cytochrome c oxidase (complex IV, CIV), that cooperate to transfer electrons derived from NADH and succinate to molecular oxygen, creating an electrochemical gradient over the inner membrane that drives transmembrane transport and the ATP synthase. Cytochrome c oxidase is the component of the respiratory chain that catalyzes the reduction of oxygen to water. Electrons originating from reduced cytochrome c in the intermembrane space (IMS) are transferred via the dinuclear copper A center (CU(A)) of subunit 2 and heme A of subunit 1 to the active site in subunit 1, a binuclear center (BNC) formed by heme A3 and copper B (CU(B)). The BNC reduces molecular oxygen to 2 water molecules using 4 electrons from cytochrome c in the IMS and 4 protons from the mitochondrial matrix. The chain is Cytochrome c oxidase subunit 8A, mitochondrial (Cox8a) from Rattus norvegicus (Rat).